Here is a 562-residue protein sequence, read N- to C-terminus: MASSGTTSTRKRFTGAEFIVHFLEQQGIKIVTGIPGGSILPVYDALSQSTQIRHILARHEQGAGFIAQGMARTDGKPAVCMACSGPGATNLVTAIADARLDSIPLICITGQVPASMIGTDAFQEVDTYGISIPITKHNYLVRHIEELPQVMSDAFRIAQSGRPGPVWIDIPKDVQTAVFEIETQPAMAEKAAAPAFSEESIRDAAAMINAAKRPVLYLGGGVINAPARVRELAEKAQLPTTMTLMALGMLPKAHPLSLGMLGMHGVRSTNYILQEADLLIVLGARFDDRAIGKTEQFCPNAKIIHVDIDRAELGKIKQPHVAIQADVDDVLAQLIPLVEAQPRAEWHQLVADLQREFPCPIPKACDPLSHYGLINAVAACVDDNAIITTDVGQHQMWTAQAYPLNRPRQWLTSGGLGTMGFGLPAAIGAALANPDRKVLCFSGDGSLMMNIQEMATASENQLDVKIILMNNEALGLVHQQQSLFYEQGVFAATYPGKINFMQIAAGFGLETCDLNNEADPQASLQEIINRPGPALIHVRIDAEEKVYPMVPPGAANTEMVGE.

Residue Glu-60 participates in thiamine diphosphate binding. FAD contacts are provided by residues Arg-162, 264-285 (HGVR…LGAR), and 307-326 (DIDR…IQAD). Residues 393-473 (QHQMWTAQAY…VKIILMNNEA (81 aa)) form a thiamine pyrophosphate binding region. Asp-444 and Asn-471 together coordinate Mg(2+).

Belongs to the TPP enzyme family. In terms of assembly, dimer of large and small chains. Requires Mg(2+) as cofactor. It depends on thiamine diphosphate as a cofactor.

It carries out the reaction 2 pyruvate + H(+) = (2S)-2-acetolactate + CO2. It participates in amino-acid biosynthesis; L-isoleucine biosynthesis; L-isoleucine from 2-oxobutanoate: step 1/4. The protein operates within amino-acid biosynthesis; L-valine biosynthesis; L-valine from pyruvate: step 1/4. The polypeptide is Acetolactate synthase isozyme 1 large subunit (ilvB) (Escherichia coli (strain K12)).